The sequence spans 106 residues: NADH-quinone oxidoreductase subunit K (106 aa).

3 consecutive transmembrane segments (helical) span residues 9-29 (LGHY…GIFL), 35-55 (IVML…MVAF), and 70-90 (FILT…VIYF).

The protein belongs to the complex I subunit 4L family. As to quaternary structure, NDH-1 is composed of 14 different subunits. Subunits NuoA, H, J, K, L, M, N constitute the membrane sector of the complex.

Its subcellular location is the cell inner membrane. The catalysed reaction is a quinone + NADH + 5 H(+)(in) = a quinol + NAD(+) + 4 H(+)(out). NDH-1 shuttles electrons from NADH, via FMN and iron-sulfur (Fe-S) centers, to quinones in the respiratory chain. The immediate electron acceptor for the enzyme in this species is believed to be ubiquinone. Couples the redox reaction to proton translocation (for every two electrons transferred, four hydrogen ions are translocated across the cytoplasmic membrane), and thus conserves the redox energy in a proton gradient. This Granulibacter bethesdensis (strain ATCC BAA-1260 / CGDNIH1) protein is NADH-quinone oxidoreductase subunit K.